A 1146-amino-acid chain; its full sequence is ATP-dependent helicase/deoxyribonuclease subunit B (1146 aa).

Positions M1–S280 constitute a UvrD-like helicase ATP-binding domain. Residue G8–T15 participates in ATP binding. Residues L276–S584 form the UvrD-like helicase C-terminal domain. [4Fe-4S] cluster is bound by residues C786, C1105, C1108, and C1114.

Belongs to the helicase family. AddB/RexB type 1 subfamily. As to quaternary structure, heterodimer of AddA and AddB. Requires Mg(2+) as cofactor. The cofactor is [4Fe-4S] cluster.

The heterodimer acts as both an ATP-dependent DNA helicase and an ATP-dependent, dual-direction single-stranded exonuclease. Recognizes the chi site generating a DNA molecule suitable for the initiation of homologous recombination. The AddB subunit has 5' -&gt; 3' nuclease activity but not helicase activity. This chain is ATP-dependent helicase/deoxyribonuclease subunit B, found in Acetivibrio thermocellus (strain ATCC 27405 / DSM 1237 / JCM 9322 / NBRC 103400 / NCIMB 10682 / NRRL B-4536 / VPI 7372) (Clostridium thermocellum).